Reading from the N-terminus, the 122-residue chain is Large ribosomal subunit protein uL14c (122 aa).

This sequence belongs to the universal ribosomal protein uL14 family. In terms of assembly, part of the 50S ribosomal subunit.

It is found in the plastid. Its subcellular location is the chloroplast. Functionally, binds to 23S rRNA. The protein is Large ribosomal subunit protein uL14c of Pleurastrum terricola (Filamentous green alga).